Consider the following 923-residue polypeptide: MHRVMTIRPDIPPQPDIAAPAEPPARVSPMMEQYHEIKAANPGLLLFYRMGDFYELFFEDAEIASRALGITLTKRGKHLGADIPMCGVPVERSDDYLHRLIALGHRVAVCEQTEDPAAARARKSVVRRDVVRLITPGTLTEDTLLDARANNYLMAIARTRGSAGVDRIGLAWIDISTGEFCVTECATGELSATLARINPNEAIVSDALYSDAELGPSLRELAAVTPLTRDVFDSATAERRLCDYFAVATMDGLAALSRLEAAAAAACVTYVDRTQLGKRPPLSPPAREAAGATMAIDPATRANLELTRTLGGERRGSLLDAIDCTVTAAGSRLLAQRLAAPLTDEAAIARRLDAVAAFVADSALREQIRSALRAAPDMARALARLSLGRGGPRDLASLRDGVSAADKVLAQLSQLAQPPHDIAAAMAALRRPSRDLCQELARALADDLPLLKRDGGFVRDGYEAALDETRKLRDASRLVVAAMQARYADETGVKGLKIRHNNVLGYFVEVTAQHGDRLMAPPLNATFIHRQTLAGQVRFTTAELGEIEAKIANAGDRALGLELDIFDRLAAMIDTAGDDLRAAAHAFALLDVATALAKLAVSDNYVRPEVDGSLAFAIEGGRHPVVEQALKRAGEPFIANACDLSPVPPPFPPPLAGEGRVGAGQIWLLTGPNMAGKSTFLRQNALIALLAQTGSFVPASRARIGIVDRLFSRVGAADDLARGRSTFMVEMVETATILNQATERALVILDEIGRGTATFDGLSIAWAAIEHLHEQNRCRALFATHYHELTALSAKLPRLFNATVRVKEWRGEVVFLHEVLPGSADRSYGIQVAKLAGLPPSVVARAKSVLAKLEANDRGQSARTLADDLPLFAMTARAPVEPPPPSEAEQLIEAVRALHPDELSPREALDALYALKAKLPKAD.

671–678 (GPNMAGKS) contributes to the ATP binding site.

It belongs to the DNA mismatch repair MutS family.

Its function is as follows. This protein is involved in the repair of mismatches in DNA. It is possible that it carries out the mismatch recognition step. This protein has a weak ATPase activity. The polypeptide is DNA mismatch repair protein MutS (Rhodopseudomonas palustris (strain BisB5)).